Here is a 560-residue protein sequence, read N- to C-terminus: Thermosome subunit alpha (560 aa).

The segment covering 535–547 (SEKKGGEGSKEES) has biased composition (basic and acidic residues). The interval 535-560 (SEKKGGEGSKEESGGEGGAGTPSLGD) is disordered.

This sequence belongs to the TCP-1 chaperonin family. Forms a heterooligomeric complex of two stacked nine-membered rings; one of alpha and the other of beta subunits. Sometimes called a 'rosettasome'.

It localises to the cytoplasm. It carries out the reaction ATP + H2O = ADP + phosphate + H(+). Molecular chaperone; binds unfolded polypeptides in vitro, stimulates protein folding and has ATPase activity. One of the most abundant proteins in the cell at all temperatures. The polypeptide is Thermosome subunit alpha (thsA) (Saccharolobus shibatae (strain ATCC 51178 / DSM 5389 / JCM 8931 / NBRC 15437 / B12) (Sulfolobus shibatae)).